Reading from the N-terminus, the 187-residue chain is Peptidyl-tRNA hydrolase (187 aa).

Residue tyrosine 14 coordinates tRNA. The active-site Proton acceptor is the histidine 19. Residues tyrosine 60, asparagine 62, and asparagine 108 each coordinate tRNA.

Belongs to the PTH family. In terms of assembly, monomer.

The protein resides in the cytoplasm. It catalyses the reaction an N-acyl-L-alpha-aminoacyl-tRNA + H2O = an N-acyl-L-amino acid + a tRNA + H(+). In terms of biological role, hydrolyzes ribosome-free peptidyl-tRNAs (with 1 or more amino acids incorporated), which drop off the ribosome during protein synthesis, or as a result of ribosome stalling. Functionally, catalyzes the release of premature peptidyl moieties from peptidyl-tRNA molecules trapped in stalled 50S ribosomal subunits, and thus maintains levels of free tRNAs and 50S ribosomes. In Mycoplasmopsis synoviae (strain 53) (Mycoplasma synoviae), this protein is Peptidyl-tRNA hydrolase.